The sequence spans 213 residues: Histone H1.1 (213 aa).

The disordered stretch occupies residues 1–43 (MSETAPVAQAASTATEKPAAAKKTKKPAKAAAPRKKPAGPSVS). Serine 2 is modified (N-acetylserine). Serine 2 and serine 12 each carry phosphoserine. The span at 8 to 18 (AQAASTATEKP) shows a compositional bias: low complexity. Position 17 is an N6-acetyllysine (lysine 17). Basic residues predominate over residues 20 to 37 (AAKKTKKPAKAAAPRKKP). At lysine 36 the chain carries N6-(beta-hydroxybutyryl)lysine. The H15 domain maps to 38-111 (AGPSVSELIV…GAAGSFKLNK (74 aa)). A Phosphoserine modification is found at serine 43. Position 54 is an N6-(beta-hydroxybutyryl)lysine (lysine 54). Arginine 56 is subject to Citrulline. Residue lysine 66 is modified to N6-(beta-hydroxybutyryl)lysine. A Phosphoserine modification is found at serine 67. At lysine 77 the chain carries N6-acetyllysine. The residue at position 87 (lysine 87) is an N6-(beta-hydroxybutyryl)lysine. Lysine 92 is subject to N6-(beta-hydroxybutyryl)lysine; alternate. Lysine 92 carries the post-translational modification N6-acetyllysine; alternate. Serine 106 carries the phosphoserine modification. The residue at position 108 (lysine 108) is an N6-(beta-hydroxybutyryl)lysine. Residues 112–213 (KAESKAITTK…KPKKAAPKKK (102 aa)) are disordered. Positions 120–144 (TKVSVKAKASGAAKKPKKTAGAAAK) are enriched in low complexity. Residue lysine 121 is modified to N6-acetyllysine. Basic residues-rich tracts occupy residues 145 to 178 (KTVK…KKVA) and 185 to 213 (KAVK…PKKK). Phosphothreonine is present on threonine 201.

The protein belongs to the histone H1/H5 family. In terms of assembly, interacts with DFFB. In terms of processing, H1 histones are progressively phosphorylated during the cell cycle, becoming maximally phosphorylated during late G2 phase and M phase, and being dephosphorylated sharply thereafter. Citrullination at Arg-56 (H1R54ci) by PADI4 takes place within the DNA-binding site of H1 and results in its displacement from chromatin and global chromatin decondensation, thereby promoting pluripotency and stem cell maintenance. Post-translationally, hydroxybutyrylation of histones is induced by starvation. In terms of tissue distribution, restricted to thymus, testis and spleen. Present also in lymphocytic and neuronal cells. Increases in testis starting with a low level at day 5 and reaching high concentrations in 20-day old and adult animals.

The protein resides in the nucleus. The protein localises to the chromosome. Histone H1 protein binds to linker DNA between nucleosomes forming the macromolecular structure known as the chromatin fiber. Histones H1 are necessary for the condensation of nucleosome chains into higher-order structured fibers. Also acts as a regulator of individual gene transcription through chromatin remodeling, nucleosome spacing and DNA methylation. This is Histone H1.1 from Mus musculus (Mouse).